The following is a 379-amino-acid chain: Cytochrome b (379 aa).

8 helical membrane passes run 33 to 53 (FGSLLGLCLLIQILTGLFLAM), 77 to 98 (WLIRYMHANGASMFFICLFLHV), 113 to 133 (WNIGVILLFAVMATAFMGYVL), 178 to 198 (FFAFHFILPFIVAALVMVHLL), 226 to 246 (IKDVLGVLLLLLLFMMLVLFS), 288 to 308 (LGGVLALVFSILILMLFPILH), 320 to 340 (LSQCLFWILVADLFTLTWIGG), and 347 to 367 (FITIGQVASILYFTIILLALP). Heme b-binding residues include His83 and His97. The heme b site is built by His182 and His196.

This sequence belongs to the cytochrome b family. The cytochrome bc1 complex contains 11 subunits: 3 respiratory subunits (MT-CYB, CYC1 and UQCRFS1), 2 core proteins (UQCRC1 and UQCRC2) and 6 low-molecular weight proteins (UQCRH/QCR6, UQCRB/QCR7, UQCRQ/QCR8, UQCR10/QCR9, UQCR11/QCR10 and a cleavage product of UQCRFS1). This cytochrome bc1 complex then forms a dimer. Heme b serves as cofactor.

The protein resides in the mitochondrion inner membrane. Functionally, component of the ubiquinol-cytochrome c reductase complex (complex III or cytochrome b-c1 complex) that is part of the mitochondrial respiratory chain. The b-c1 complex mediates electron transfer from ubiquinol to cytochrome c. Contributes to the generation of a proton gradient across the mitochondrial membrane that is then used for ATP synthesis. The polypeptide is Cytochrome b (MT-CYB) (Sciurus niger (Eastern fox squirrel)).